A 278-amino-acid chain; its full sequence is MALKSFNPTTPSQRQLVIVSRAGLYKGKPVKTLTEGLSSKGGRNNLGRITVRFQGGGHKRTYRLVDFKRRKFDVEGTVERLEYDPNRTAFIALVNYADGEQAYILAPQRLAVGDKVIASEKAVDVKPGNAMPLQFIPVGSIIHNVEMKPGKGGQIARSAGTYAQLVGRDQGMAILRLNSGEQRLVHGSCLASIGAVSNPDHGNINDGKAGRSRWRGKRPHVRGVVMNPVDHPHGGGEGRTSGGRHPVTPWGKPTKGKRTRSNKSTDKFIMRSRHQRKK.

Residues 201–278 (HGNINDGKAG…IMRSRHQRKK (78 aa)) are disordered. The span at 210 to 221 (GRSRWRGKRPHV) shows a compositional bias: basic residues.

The protein belongs to the universal ribosomal protein uL2 family. As to quaternary structure, part of the 50S ribosomal subunit. Forms a bridge to the 30S subunit in the 70S ribosome.

In terms of biological role, one of the primary rRNA binding proteins. Required for association of the 30S and 50S subunits to form the 70S ribosome, for tRNA binding and peptide bond formation. It has been suggested to have peptidyltransferase activity; this is somewhat controversial. Makes several contacts with the 16S rRNA in the 70S ribosome. The sequence is that of Large ribosomal subunit protein uL2 from Rhizobium meliloti (strain 1021) (Ensifer meliloti).